A 418-amino-acid polypeptide reads, in one-letter code: Glutamyl-tRNA reductase (418 aa).

Substrate is bound by residues 49-52 (TCNR), serine 107, 112-114 (EPQ), and glutamine 118. Cysteine 50 functions as the Nucleophile in the catalytic mechanism. 187–192 (GAGETI) contributes to the NADP(+) binding site.

Belongs to the glutamyl-tRNA reductase family. In terms of assembly, homodimer.

The enzyme catalyses (S)-4-amino-5-oxopentanoate + tRNA(Glu) + NADP(+) = L-glutamyl-tRNA(Glu) + NADPH + H(+). It functions in the pathway porphyrin-containing compound metabolism; protoporphyrin-IX biosynthesis; 5-aminolevulinate from L-glutamyl-tRNA(Glu): step 1/2. In terms of biological role, catalyzes the NADPH-dependent reduction of glutamyl-tRNA(Glu) to glutamate 1-semialdehyde (GSA). This chain is Glutamyl-tRNA reductase, found in Pseudoalteromonas translucida (strain TAC 125).